The following is a 100-amino-acid chain: Large ribosomal subunit protein eL21 (100 aa).

This sequence belongs to the eukaryotic ribosomal protein eL21 family.

The sequence is that of Large ribosomal subunit protein eL21 from Pyrobaculum aerophilum (strain ATCC 51768 / DSM 7523 / JCM 9630 / CIP 104966 / NBRC 100827 / IM2).